The following is a 402-amino-acid chain: Bone morphogenetic protein 8A (402 aa).

An N-terminal signal peptide occupies residues 1–19 (MAARPGPLWLLGLTLCALG). The propeptide occupies 20-263 (GGGPGLRPPP…ASPSPIRTPR (244 aa)). N-linked (GlcNAc...) asparagine glycans are attached at residues Asn-158 and Asn-343. 3 cysteine pairs are disulfide-bonded: Cys-301/Cys-367, Cys-330/Cys-399, and Cys-334/Cys-401.

It belongs to the TGF-beta family. Homodimer; disulfide-linked.

The protein resides in the secreted. Functionally, induces cartilage and bone formation. May be the osteoinductive factor responsible for the phenomenon of epithelial osteogenesis. Plays a role in calcium regulation and bone homeostasis. Signaling protein involved in regulation of thermogenesis and energy balance. Proposed to increase the peripheral response of brown adipose tissue (BAT) to adrenergic stimulation while acting centrally in the hypothalamus to increase sympathetic output to BAT. Its function is as follows. Growth factor of the TGF-beta superfamily that plays important role in various biological processes, including spermatogenesis, osteogenesis, steroidogenesis as well as regulation of energy balance. Initiates the canonical BMP signaling cascade by associating with type I receptor BMPR1A and type II receptor BMPR2. Once all three components are bound together in a complex at the cell surface, BMPR2 phosphorylates and activates BMPR1A. In turn, BMPR1A propagates signal by phosphorylating SMAD1/5/8 that travel to the nucleus and act as activators and repressors of transcription of target genes. In addition, activates the SMAD2/3 pathway. This Homo sapiens (Human) protein is Bone morphogenetic protein 8A (BMP8A).